Reading from the N-terminus, the 196-residue chain is Adenylyl-sulfate kinase (196 aa).

An ATP-binding site is contributed by 31-38 (GLSGAGKS). Ser-105 (phosphoserine intermediate) is an active-site residue.

It belongs to the APS kinase family.

The catalysed reaction is adenosine 5'-phosphosulfate + ATP = 3'-phosphoadenylyl sulfate + ADP + H(+). It functions in the pathway sulfur metabolism; hydrogen sulfide biosynthesis; sulfite from sulfate: step 2/3. Catalyzes the synthesis of activated sulfate. The polypeptide is Adenylyl-sulfate kinase (Aeromonas salmonicida (strain A449)).